A 184-amino-acid polypeptide reads, in one-letter code: GTP cyclohydrolase 1 (184 aa).

The Zn(2+) site is built by cysteine 74, histidine 77, and cysteine 145.

Belongs to the GTP cyclohydrolase I family. Toroid-shaped homodecamer, composed of two pentamers of five dimers.

The catalysed reaction is GTP + H2O = 7,8-dihydroneopterin 3'-triphosphate + formate + H(+). Its pathway is cofactor biosynthesis; 7,8-dihydroneopterin triphosphate biosynthesis; 7,8-dihydroneopterin triphosphate from GTP: step 1/1. This Aquifex aeolicus (strain VF5) protein is GTP cyclohydrolase 1 (folE).